A 264-amino-acid chain; its full sequence is THAP domain-containing protein 10 (264 aa).

Residues 1–90 (MPARCVAAHC…LVAGAVPTLH (90 aa)) form a THAP-type zinc finger. Disordered regions lie at residues 90–136 (HRVP…PRAG) and 160–195 (TQPH…KRPR). The span at 99–122 (GGEEGDQAGRPDTRGELQAARHSE) shows a compositional bias: basic and acidic residues. Over residues 160–175 (TQPHADNPSNTVTSVP) the composition is skewed to polar residues.

The protein is THAP domain-containing protein 10 (THAP10) of Pongo abelii (Sumatran orangutan).